We begin with the raw amino-acid sequence, 52 residues long: Conotoxin Cal6.3b (52 aa).

The propeptide occupies 1–4 (KKKR). 3 cysteine pairs are disulfide-bonded: cysteine 12–cysteine 23, cysteine 15–cysteine 27, and cysteine 22–cysteine 30. Glutamine amide is present on glutamine 50.

As to expression, expressed by the venom duct.

Its subcellular location is the secreted. Functionally, probable neurotoxin with unknown target. Possibly targets ion channels. The polypeptide is Conotoxin Cal6.3b (Californiconus californicus (California cone)).